Here is a 987-residue protein sequence, read N- to C-terminus: Eukaryotic translation initiation factor 3 subunit A (987 aa).

Positions Leu93–Asp122 form a coiled coil. One can recognise a PCI domain in the interval Leu316–Ile513. 2 coiled-coil regions span residues Thr556–Arg742 and Leu797–Leu858. The span at Gln808–Leu859 shows a compositional bias: basic and acidic residues. The interval Gln808–Arg987 is disordered. Residues Pro872–Ala894 show a composition bias toward low complexity. 2 stretches are compositionally biased toward polar residues: residues Thr905–Ser916 and Thr976–Arg987.

It belongs to the eIF-3 subunit A family. In terms of assembly, component of the eukaryotic translation initiation factor 3 (eIF-3) complex. Binds to the translation initiation factor TIF3H1.

The protein resides in the cytoplasm. In terms of biological role, RNA-binding component of the eukaryotic translation initiation factor 3 (eIF-3) complex, which is involved in protein synthesis of a specialized repertoire of mRNAs and, together with other initiation factors, stimulates binding of mRNA and methionyl-tRNAi to the 40S ribosome. The eIF-3 complex specifically targets and initiates translation of a subset of mRNAs involved in cell proliferation. The sequence is that of Eukaryotic translation initiation factor 3 subunit A (TIF3A1) from Arabidopsis thaliana (Mouse-ear cress).